The chain runs to 823 residues: NAD-dependent histone deacetylase sirtuin-1 (823 aa).

Over residues 41-67 (LASTSTEAEAEAEATATTTEPATSELA) the composition is skewed to low complexity. Residues 41-146 (LASTSTEAEA…SSSNCSSSVE (106 aa)) are disordered. Positions 72–95 (GEIKTKTLAAREEQEIGANLEHKT) are enriched in basic and acidic residues. Over residues 104–137 (EDEDDEEEEEEDDEEEEEDDEEGITGTSNEDEDS) the composition is skewed to acidic residues. The Deacetylase sirtuin-type domain maps to 204-499 (KLASVNTFDD…LCCDESVLTE (296 aa)). NAD(+) is bound by residues 229 to 248 (GAGV…NGIY) and 313 to 316 (QNID). Catalysis depends on H331, which acts as the Proton acceptor. C339, C342, C363, and C366 together coordinate Zn(2+). Residues 427–429 (GSS), 452–454 (NRE), and S469 contribute to the NAD(+) site. Phosphoserine occurs at positions 618 and 621. The span at 698–707 (DYSDDDDEEE) shows a compositional bias: acidic residues. Disordered regions lie at residues 698–722 (DYSD…GNVG) and 777–823 (IIEQ…LAAV). The span at 798 to 813 (PSEENKQQTQIERSEE) shows a compositional bias: basic and acidic residues. The span at 814 to 823 (SPPPGQLAAV) shows a compositional bias: pro residues.

The protein belongs to the sirtuin family. Class I subfamily. In terms of assembly, interacts with the transcriptional repressors hairy (hry) and deadpan (dpn); via basic domains. Associates with the Esc/E(z) histone methyltransferase complex. Interacts directly with E(z) and HDAC1/Rpd3. Zn(2+) serves as cofactor.

The protein resides in the cytoplasm. The protein localises to the nucleus. It is found in the chromosome. The enzyme catalyses N(6)-acetyl-L-lysyl-[protein] + NAD(+) + H2O = 2''-O-acetyl-ADP-D-ribose + nicotinamide + L-lysyl-[protein]. Its function is as follows. NAD-dependent histone deacetylase involved in heterochromatic silencing. Mildly suppresses the heterochromatin-mediated silencing phenomenon known as position-effect variegation (PEV). Required for epigenetic silencing of the polycomb group proteins. Has histone H4 deacetylase activity in vitro. Required maternally for establishing proper segmentation of the embryo. Involved in sex determination. May be involved in the regulation of life span. This chain is NAD-dependent histone deacetylase sirtuin-1, found in Drosophila melanogaster (Fruit fly).